Reading from the N-terminus, the 467-residue chain is Argininosuccinate lyase (467 aa).

This sequence belongs to the lyase 1 family. Argininosuccinate lyase subfamily.

The protein localises to the cytoplasm. The catalysed reaction is 2-(N(omega)-L-arginino)succinate = fumarate + L-arginine. Its pathway is amino-acid biosynthesis; L-arginine biosynthesis; L-arginine from L-ornithine and carbamoyl phosphate: step 3/3. The protein is Argininosuccinate lyase of Nitrosococcus oceani (strain ATCC 19707 / BCRC 17464 / JCM 30415 / NCIMB 11848 / C-107).